Here is a 346-residue protein sequence, read N- to C-terminus: Structure-specific endonuclease subunit SLX1 (346 aa).

Positions 10–92 (ALYCVYILRS…TNPHTSLHIP (83 aa)) constitute a GIY-YIG domain. The SLX1-type zinc-finger motif lies at 238–296 (CVVCKEEIDPEEGGLHAVCSNEGCEGVGHLRCWGRYLLKSEEGGGEGAILPVGGRCPRC). A compositionally biased stretch (basic residues) spans 324 to 336 (KVKRKRAPRKKTA). Residues 324 to 346 (KVKRKRAPRKKTAKTKETREEDG) form a disordered region. A compositionally biased stretch (basic and acidic residues) spans 337–346 (KTKETREEDG).

The protein belongs to the SLX1 family. Forms a heterodimer with SLX4. It depends on a divalent metal cation as a cofactor.

It is found in the nucleus. Its function is as follows. Catalytic subunit of the SLX1-SLX4 structure-specific endonuclease that resolves DNA secondary structures generated during DNA repair and recombination. Has endonuclease activity towards branched DNA substrates, introducing single-strand cuts in duplex DNA close to junctions with ss-DNA. This Podospora anserina (strain S / ATCC MYA-4624 / DSM 980 / FGSC 10383) (Pleurage anserina) protein is Structure-specific endonuclease subunit SLX1.